Consider the following 414-residue polypeptide: 3-oxo-isoapionate-4-phosphate transcarboxylase/hydrolase (414 aa).

Mg(2+)-binding residues include Lys180, Asp182, and Glu183. An N6-carboxylysine modification is found at Lys180.

Belongs to the RuBisCO large chain family. Requires Mg(2+) as cofactor.

The enzyme catalyses 3-oxoisoapionate 4-phosphate + H2O = (2R)-3-phosphoglycerate + glycolate + H(+). The protein operates within carbohydrate metabolism. Involved in catabolism of D-apiose. Catalyzes the conversion of 3-oxo-isoapionate 4-phosphate to 3-phosphoglycerate and glycolate. The sequence is that of 3-oxo-isoapionate-4-phosphate transcarboxylase/hydrolase from Xanthobacter autotrophicus (strain ATCC BAA-1158 / Py2).